Reading from the N-terminus, the 147-residue chain is ATP synthase epsilon chain (147 aa).

Belongs to the ATPase epsilon chain family. F-type ATPases have 2 components, CF(1) - the catalytic core - and CF(0) - the membrane proton channel. CF(1) has five subunits: alpha(3), beta(3), gamma(1), delta(1), epsilon(1). CF(0) has three main subunits: a, b and c.

Its subcellular location is the cell inner membrane. In terms of biological role, produces ATP from ADP in the presence of a proton gradient across the membrane. The chain is ATP synthase epsilon chain from Protochlamydia amoebophila (strain UWE25).